Reading from the N-terminus, the 351-residue chain is Protein FAM118B (351 aa).

A2 carries the post-translational modification N-acetylalanine. Residue S9 is modified to Phosphoserine.

This sequence belongs to the FAM118 family.

The protein resides in the nucleus. The protein localises to the cajal body. Functionally, may play a role in Cajal bodies formation. The polypeptide is Protein FAM118B (FAM118B) (Bos taurus (Bovine)).